The chain runs to 160 residues: Flavodoxin (160 aa).

Residues 3–153 form the Flavodoxin-like domain; that stretch reads ISILYSSKTG…NARIFGERIA (151 aa).

The protein belongs to the flavodoxin family. Requires FMN as cofactor.

Its function is as follows. Low-potential electron donor to a number of redox enzymes. This chain is Flavodoxin (floX), found in Clostridium saccharobutylicum.